The primary structure comprises 309 residues: Elongation factor Ts (309 aa).

The tract at residues 82–85 (TDFV) is involved in Mg(2+) ion dislocation from EF-Tu.

Belongs to the EF-Ts family.

It localises to the cytoplasm. Its function is as follows. Associates with the EF-Tu.GDP complex and induces the exchange of GDP to GTP. It remains bound to the aminoacyl-tRNA.EF-Tu.GTP complex up to the GTP hydrolysis stage on the ribosome. The chain is Elongation factor Ts from Rickettsia peacockii (strain Rustic).